Here is a 243-residue protein sequence, read N- to C-terminus: R-spondin-2 (243 aa).

An N-terminal signal peptide occupies residues M1–C21. 11 disulfide bridges follow: C40/C46, C43/C52, C55/C74, C78/C93, C96/C104, C101/C110, C113/C124, C128/C141, C145/C187, C156/C163, and C196/C203. One copy of the FU repeat lies at M90–P134. The 61-residue stretch at G144–P204 folds into the TSP type-1 domain. A glycan (N-linked (GlcNAc...) asparagine) is linked at N160. A compositionally biased stretch (basic residues) spans P204–L224. Positions P204–Q243 are disordered.

It belongs to the R-spondin family. As to quaternary structure, interacts with WNT1. Binds heparin. Interacts with LGR4, LGR5 and LGR6. Interacts with E3 ubiquitin ligases RNF43 and ZNRF3.

It is found in the secreted. Activator of the canonical Wnt signaling pathway by acting as a ligand for LGR4-6 receptors. Upon binding to LGR4-6 (LGR4, LGR5 or LGR6), LGR4-6 associate with phosphorylated LRP6 and frizzled receptors that are activated by extracellular Wnt receptors, triggering the canonical Wnt signaling pathway to increase expression of target genes. Also regulates the canonical Wnt/beta-catenin-dependent pathway and non-canonical Wnt signaling by acting as an inhibitor of ZNRF3, an important regulator of the Wnt signaling pathway. During embryonic development, plays a crucial role in limb specification, amplifying the Wnt signaling pathway independently of LGR4-6 receptors, possibly by acting as a direct antagonistic ligand to RNF43 and ZNRF3, hence governing the number of limbs an embryo should form. The chain is R-spondin-2 (RSPO2) from Homo sapiens (Human).